Consider the following 474-residue polypeptide: UDP-N-acetylmuramate--L-alanine ligase (474 aa).

Position 123–129 (Gly-123–Thr-129) interacts with ATP.

The protein belongs to the MurCDEF family.

It is found in the cytoplasm. It catalyses the reaction UDP-N-acetyl-alpha-D-muramate + L-alanine + ATP = UDP-N-acetyl-alpha-D-muramoyl-L-alanine + ADP + phosphate + H(+). It participates in cell wall biogenesis; peptidoglycan biosynthesis. Cell wall formation. This is UDP-N-acetylmuramate--L-alanine ligase from Alcanivorax borkumensis (strain ATCC 700651 / DSM 11573 / NCIMB 13689 / SK2).